The sequence spans 395 residues: MRN complex-interacting protein (395 aa).

Residues 90–100 (DPKSEQEEAHV) show a composition bias toward basic and acidic residues. Disordered stretches follow at residues 90-155 (DPKS…GGNC) and 180-275 (KRSS…FGES). Polar residues predominate over residues 104-113 (SKYTDQTTEG). Acidic residues predominate over residues 117-127 (EKDDEDEDENV). A Nuclear localization signal (NLS) motif is present at residues 142–145 (RKKM). Over residues 183-195 (SSSWNKGSVSKYS) the composition is skewed to low complexity. 2 stretches are compositionally biased toward polar residues: residues 224 to 244 (ACSS…QIKS) and 260 to 270 (QSESPSVSSHQ).

Belongs to the MRNIP family.

Its subcellular location is the nucleus. It is found in the nucleoplasm. Functionally, plays a role in the cellular response to DNA damage and the maintenance of genome stability through its association with the MRN damage-sensing complex. Promotes chromatin loading and activity of the MRN complex to facilitate subsequent ATM-mediated DNA damage response signaling and DNA repair. The polypeptide is MRN complex-interacting protein (Danio rerio (Zebrafish)).